Here is a 138-residue protein sequence, read N- to C-terminus: MLQPARTKYRKMQKGRMRGKAYRGSDLAQGEYGLQATECGRLTSRQIEAARVAITRYVKRGGKLWIRVFPDKPITKKPAETRMGTGKGNVEFYVAVVKPGRVLYELAGVDDASAKKAFHLAAHKLPVATKLVKRGETL.

It belongs to the universal ribosomal protein uL16 family. Part of the 50S ribosomal subunit.

Its function is as follows. Binds 23S rRNA and is also seen to make contacts with the A and possibly P site tRNAs. This chain is Large ribosomal subunit protein uL16, found in Anaeromyxobacter dehalogenans (strain 2CP-C).